We begin with the raw amino-acid sequence, 343 residues long: GTPase Obg (343 aa).

An Obg domain is found at Met-1–Leu-158. The tract at residues Arg-121 to His-140 is disordered. Positions Ala-159 to Arg-333 constitute an OBG-type G domain. Residues Gly-165–Ser-172, Phe-190–Glu-194, Asp-215–Gly-218, Ser-286–Asp-289, and Ser-314–Val-316 contribute to the GTP site. Ser-172 and Thr-192 together coordinate Mg(2+).

It belongs to the TRAFAC class OBG-HflX-like GTPase superfamily. OBG GTPase family. In terms of assembly, monomer. Mg(2+) is required as a cofactor.

It is found in the cytoplasm. Functionally, an essential GTPase which binds GTP, GDP and possibly (p)ppGpp with moderate affinity, with high nucleotide exchange rates and a fairly low GTP hydrolysis rate. Plays a role in control of the cell cycle, stress response, ribosome biogenesis and in those bacteria that undergo differentiation, in morphogenesis control. This chain is GTPase Obg, found in Acidobacterium capsulatum (strain ATCC 51196 / DSM 11244 / BCRC 80197 / JCM 7670 / NBRC 15755 / NCIMB 13165 / 161).